The primary structure comprises 730 residues: Pheromone-processing carboxypeptidase KEX1 (730 aa).

A signal peptide spans 1–19 (MLHATVLPILLWLATLAYG). The Lumenal portion of the chain corresponds to 20 to 599 (FDRKEFLVDG…DEDEEGSNFK (580 aa)). Asn-60 carries an N-linked (GlcNAc...) asparagine glycan. Active-site residues include Ser-181, Asp-376, and His-441. Residues 475-590 (SSKDGDIDGY…LETGGEYYQD (116 aa)) are disordered. Residues 486–497 (EDDKSQDENKDN) show a composition bias toward basic and acidic residues. 2 N-linked (GlcNAc...) asparagine glycosylation sites follow: Asn-497 and Asn-507. Over residues 498 to 514 (ESEDESEDENDSDDESD) the composition is skewed to acidic residues. The segment covering 515-526 (GKEGDKQENKPD) has biased composition (basic and acidic residues). Composition is skewed to acidic residues over residues 527 to 557 (DSDDESDEEDDDEDEDDEDDDDDDDDDDGDD) and 579 to 590 (NDLETGGEYYQD). Residues 600–620 (AFFLILSLVSAFIIVAAFYIS) form a helical membrane-spanning segment. At 621–730 (DYIKSRRHPI…DIELQDIERH (110 aa)) the chain is on the cytoplasmic side. A disordered region spans residues 684–730 (EDEEQLEGVVPESTRKSKKGSKKKGKYFSVPNDDSAEDIELQDIERH). The segment covering 699–709 (KSKKGSKKKGK) has biased composition (basic residues). The span at 717-730 (DSAEDIELQDIERH) shows a compositional bias: acidic residues.

Belongs to the peptidase S10 family.

Its subcellular location is the golgi apparatus. It localises to the trans-Golgi network membrane. The enzyme catalyses Preferential release of a C-terminal arginine or lysine residue.. Protease with a carboxypeptidase B-like function involved in the C-terminal processing of the lysine and arginine residues from protein precursors. Promotes cell fusion and is involved in the programmed cell death. This chain is Pheromone-processing carboxypeptidase KEX1 (KEX1), found in Candida glabrata (strain ATCC 2001 / BCRC 20586 / JCM 3761 / NBRC 0622 / NRRL Y-65 / CBS 138) (Yeast).